The chain runs to 211 residues: Thymidylate kinase (211 aa).

Position 11 to 18 (11 to 18 (GPDGAGKT)) interacts with ATP.

Belongs to the thymidylate kinase family.

The enzyme catalyses dTMP + ATP = dTDP + ADP. Functionally, phosphorylation of dTMP to form dTDP in both de novo and salvage pathways of dTTP synthesis. The polypeptide is Thymidylate kinase (Streptococcus pyogenes serotype M1).